We begin with the raw amino-acid sequence, 497 residues long: Intermediate filament protein A (497 aa).

Residues 1 to 32 are coil 1A; that stretch reads MSDLNDRLASYIEKVRFLEAQNRKLAADLDLL. The IF rod domain occupies 1 to 342; sequence MSDLNDRLAS…KMLEGEENRA (342 aa). Positions 33–46 are linker 1; the sequence is RGRWGKDTLSVRAM. Residues 47 to 184 are coil 1B; sequence YEGELQEARK…RVHDQEIAEL (138 aa). Residues 185–202 are linker 12; that stretch reads QAMASRDTTPENREYFKN. The coil 2 stretch occupies residues 203 to 342; that stretch reads ELASAIRDIR…KMLEGEENRA (140 aa). Positions 343–497 are tail; that stretch reads GLRQLVEQVV…THIQRSSHTI (155 aa). Positions 375 to 493 constitute an LTD domain; it reads SRTSFQRSAK…EERATHIQRS (119 aa).

The protein belongs to the intermediate filament family. In terms of assembly, a and B can form homopolymers. Giant body muscle cells.

It is found in the cytoplasm. In Ascaris suum (Pig roundworm), this protein is Intermediate filament protein A.